Here is a 684-residue protein sequence, read N- to C-terminus: Threonine--tRNA ligase (684 aa).

The TGS domain occupies 1–66; the sequence is MSTAASPAPA…DADVEVVPVP (66 aa). A catalytic region spans residues 261–567; the sequence is DHRKLGVELD…LTEHYAGAFP (307 aa). Positions 366, 417, and 544 each coordinate Zn(2+).

The protein belongs to the class-II aminoacyl-tRNA synthetase family. As to quaternary structure, homodimer. Requires Zn(2+) as cofactor.

It is found in the cytoplasm. It catalyses the reaction tRNA(Thr) + L-threonine + ATP = L-threonyl-tRNA(Thr) + AMP + diphosphate + H(+). In terms of biological role, catalyzes the attachment of threonine to tRNA(Thr) in a two-step reaction: L-threonine is first activated by ATP to form Thr-AMP and then transferred to the acceptor end of tRNA(Thr). Also edits incorrectly charged L-seryl-tRNA(Thr). In Mycobacterium sp. (strain KMS), this protein is Threonine--tRNA ligase.